We begin with the raw amino-acid sequence, 150 residues long: PTTG1IP family member 2 (150 aa).

Residues 1–19 form the signal peptide; the sequence is MCWLRAWSHILLPVFLSVA. Over 20-98 the chain is Extracellular; it reads LIQLIFNLSD…SIFWANCNVD (79 aa). N-linked (GlcNAc...) asparagine glycosylation occurs at asparagine 26. Residues 99-119 form a helical membrane-spanning segment; the sequence is LFGIVMLILIVILALAFLWYC. Residues 120–150 are Cytoplasmic-facing; sequence LAYYFYMQQHMALYARHGQVPVYNWDAPGDW.

It localises to the membrane. This chain is PTTG1IP family member 2, found in Mus musculus (Mouse).